The following is a 997-amino-acid chain: Signal peptide, CUB and EGF-like domain-containing protein 2 (997 aa).

The N-terminal stretch at M1 to A28 is a signal peptide. One can recognise an EGF-like 1; calcium-binding domain in the interval D43 to E83. Cystine bridges form between C47–C60, C54–C69, C71–C82, C88–C100, C96–C109, C111–C124, C130–C141, and C137–C150. In terms of domain architecture, EGF-like 2; calcium-binding spans D84–L125. The EGF-like 3; calcium-binding domain maps to D126–Q162. 3 EGF-like domains span residues C175–C211, C215–C250, and C284–C319. The 41-residue stretch at D321–Q361 folds into the EGF-like 7; calcium-binding domain. Cystine bridges form between C325–C336, C332–C345, C347–C360, C366–C376, C372–C385, C387–C399, C405–C416, C412–C425, and C427–C440. In terms of domain architecture, EGF-like 8; calcium-binding spans D362–G400. Positions D401–V441 constitute an EGF-like 9; calcium-binding domain. A glycan (N-linked (GlcNAc...) asparagine) is linked at N657. The cysteines at positions 807 and 833 are disulfide-linked. A CUB domain is found at C807–Y919. The interaction with the cholesterol-anchor of SHH stretch occupies residues I845 to L854. Cysteines 860 and 881 form a disulfide.

As to quaternary structure, interacts with SHH via the cholesterol anchor of the dually lipid-modified SHH (ShhNp). Interacts with PTCH1. Forms homooligomers and heterooligomers with SCUBE1 and SCUBE3. Interacts with VEGFR2. N-glycosylated. As to expression, expressed in adult heart, lung and testis.

Its subcellular location is the secreted. It is found in the cell surface. Functionally, lipid-binding protein required for SHH long-range signaling by binding to the dually lipid-modified SHH (ShhNp) and by promoting ShhNp mobilization, solubilization and release from the cell membrane. Acts by enhancing the proteolytic processing (shedding) of the lipid-modified N- and C- terminal of ShhNp at the cell surface. Synergizes with DISP1 to cause an increase in SHH secretion. Probable cell surface coreceptor for VEGFR2 involved in VEGFR2-mediated angiogenesis. The chain is Signal peptide, CUB and EGF-like domain-containing protein 2 from Mus musculus (Mouse).